An 865-amino-acid chain; its full sequence is Centrosomal protein of 97 kDa (865 aa).

LRR repeat units follow at residues 37 to 58 (DIHTLILDKNQIIKLENLEKCK), 59 to 80 (RLIQLSVANNRLVRMMGVAKLT), 81 to 102 (LLRVLNLPHNSIGCVEGLKELV), 103 to 124 (HLEWLNLAGNNLKAMEQINSCT), 125 to 146 (ALQHLDLSDNNISQIGDLSKLV), 147 to 168 (SLKTLLLHGNIITSLRMAPAYL), 171 to 192 (SLAILSLAENEIRDLNEISFLA), and 196 to 205 (ELEQLSIMNN). Residues 211–249 (TPSIPGFDYRPYIVSWCLNLRVLDGYVISQKESLKAEWL) form the LRRCT domain. The tract at residues 300–750 (HQRQLMNQSQ…RYGKESDLGD (451 aa)) is CCP110-binding. Residues Ser-308, Ser-413, and Ser-500 each carry the phosphoserine modification. The tract at residues 506–529 (ESTEQKQSDIKKPENTQPENKETI) is disordered. The segment covering 508 to 527 (TEQKQSDIKKPENTQPENKE) has biased composition (basic and acidic residues). Phosphoserine is present on Ser-530. Phosphothreonine is present on Thr-542. The 30-residue stretch at 558–587 (LNDAATKLQACWRGFYARNYNPQAKDVRYE) folds into the IQ domain. Residues 587 to 865 (EIRLRRMQEH…FQLLHVGVTV (279 aa)) are interaction with MPHOSPH9. A disordered region spans residues 715–769 (QHSLDFEKSSTEGSESSIMGNSIDTVRYGKESDLGDVSEEHGEWNKESSNNEQDN). Positions 725–738 (TEGSESSIMGNSID) are enriched in polar residues. Residues 741–760 (RYGKESDLGDVSEEHGEWNK) show a composition bias toward basic and acidic residues. Position 763 is a phosphoserine (Ser-763).

Interacts with CALM1, CEP76, KIF24 and TALPID3. Interacts with CCP110. ENKD1 competes with CEP97 for binding to CCP110, destabilizing the interaction between CP110 and CEP97 which promotes the removal of CCP110 and CEP97 from the mother centriole and allows the initiation of ciliogenesis. Via its interaction with CCP110, may indirectly interact with HERC2 and NEURL4. Interacts with MPHOSPH9.

It is found in the cytoplasm. The protein localises to the cytoskeleton. It localises to the microtubule organizing center. The protein resides in the centrosome. Its subcellular location is the centriole. Its function is as follows. Acts as a key negative regulator of ciliogenesis in collaboration with CCP110 by capping the mother centriole thereby preventing cilia formation. Required for recruitment of CCP110 to the centrosome. The sequence is that of Centrosomal protein of 97 kDa (CEP97) from Homo sapiens (Human).